Consider the following 658-residue polypeptide: Secretin XcpQ (658 aa).

The signal sequence occupies residues 1-34 (MSQPLLRALFAPSSRSYVPAVLLSLALGIQAAHA). Positions 51–141 (AHWTINLKDA…TEAGGGQSAP (91 aa)) are N0. Positions 142 to 205 (DRLETRVIQV…DVIRQLDQKG (64 aa)) are N1. The tract at residues 206-279 (SHDYSVINLR…SLDTPTARSA (74 aa)) is N2. The tract at residues 280–365 (NTRVIRLRHN…VPRAQVLVEA (86 aa)) is N3. The segment at 302 to 322 (SEGMKNNGGQGGEQTGGGRPS) is disordered. A compositionally biased stretch (gly residues) spans 307–320 (NNGGQGGEQTGGGR). Residues 368–606 (VEISGDIQDA…VFLRPTVVRD (239 aa)) form a secretin region. Positions 608–658 (AGLAALSGKKYSDIRVIDGTRGPEGRPSILPTNANQLFDGQAVDLRELMTE) are s domain.

It belongs to the bacterial secretin family. GSP D subfamily. In terms of assembly, forms a cylindrical channel with 15 subunits. The closed pentadecameric channel is 170 Angstroms long and 140 Angstroms in diameter.

The protein localises to the cell outer membrane. In terms of biological role, involved in a type II secretion system (T2SS, formerly general secretion pathway, GSP) for the export of proteins. This subunit forms the outer membrane channel. Among its substrates are PrpL, elastase LasB, chitin binding protein D (CbpD), aminopeptidase PaAP, and metalloprotease ImpA. The protein is Secretin XcpQ of Pseudomonas aeruginosa (strain ATCC 15692 / DSM 22644 / CIP 104116 / JCM 14847 / LMG 12228 / 1C / PRS 101 / PAO1).